The chain runs to 470 residues: Argininosuccinate lyase (470 aa).

Belongs to the lyase 1 family. Argininosuccinate lyase subfamily.

It localises to the cytoplasm. It carries out the reaction 2-(N(omega)-L-arginino)succinate = fumarate + L-arginine. It participates in amino-acid biosynthesis; L-arginine biosynthesis; L-arginine from L-ornithine and carbamoyl phosphate: step 3/3. This is Argininosuccinate lyase from Leptospira interrogans serogroup Icterohaemorrhagiae serovar copenhageni (strain Fiocruz L1-130).